The sequence spans 259 residues: Enkurin (259 aa).

2 disordered regions span residues 1-26 (MVAM…EPPQ) and 76-98 (PPKK…TDHP). Residues 76 to 88 (PPKKKFEWNERRK) show a composition bias toward basic and acidic residues. The SH3-binding motif lies at 86–92 (RRKPPVP). In terms of domain architecture, Enkurin spans 163–255 (KRNEEVKKAQ…VLEKHKVIYI (93 aa)). The tract at residues 163–258 (KRNEEVKKAQ…KHKVIYIANK (96 aa)) is interaction with TRPC proteins. In terms of domain architecture, IQ spans 179 to 190 (IQENLRKAAMKR).

In terms of assembly, microtubule inner protein component of sperm flagellar doublet microtubules. Binds calmodulin via its IQ domain. Interacts with TRPC1, TRPC2, TRPC5, but not TRPC3. Interacts with CFAP45. Expressed in trachea multiciliated cells.

The protein resides in the cytoplasm. It is found in the cytoskeleton. Its subcellular location is the flagellum axoneme. The protein localises to the cilium axoneme. Functionally, adapter that functions to localize a calcium-sensitive signal transduction machinery in sperm to a calcium-permeable ion channel. Microtubule inner protein (MIP) part of the dynein-decorated doublet microtubules (DMTs) in cilia axoneme, which is required for motile cilia beating. This Bos taurus (Bovine) protein is Enkurin (ENKUR).